The sequence spans 462 residues: Elongation factor 1-alpha 1 (462 aa).

N,N,N-trimethylglycine is present on Gly2. The region spanning 5 to 242 (KTHINIVVIG…DCILPPTRPT (238 aa)) is the tr-type G domain. A G1 region spans residues 14 to 21 (GHVDSGKS). 14–21 (GHVDSGKS) provides a ligand contact to GTP. Lys36 carries the post-translational modification N6,N6,N6-trimethyllysine; alternate. N6,N6-dimethyllysine; alternate is present on Lys36. N6-methyllysine; alternate is present on Lys36. Lys55 is modified (N6,N6-dimethyllysine). The segment at 70-74 (GITID) is G2. Position 79 is an N6,N6,N6-trimethyllysine; by EEF1AKMT1 (Lys79). The G3 stretch occupies residues 91–94 (DAPG). Residue 153–156 (NKMD) coordinates GTP. The tract at residues 153–156 (NKMD) is G4. At Lys165 the chain carries N6,N6,N6-trimethyllysine; alternate; by EEF1AKMT3. At Lys165 the chain carries N6,N6-dimethyllysine; alternate; by EEF1AKMT3. N6-acetyllysine; alternate is present on Lys165. Lys165 bears the N6-methyllysine; alternate; by EEF1AKMT3 mark. Lys172 is subject to N6-acetyllysine. 194 to 196 (SGW) is a binding site for GTP. Residues 194–196 (SGW) are G5. N6-acetyllysine is present on Lys273. A Phosphoserine; by TGFBR1 modification is found at Ser300. At Glu301 the chain carries 5-glutamyl glycerylphosphorylethanolamine. An N6,N6,N6-trimethyllysine; by EEF1AKMT2 modification is found at Lys318. 5-glutamyl glycerylphosphorylethanolamine is present on Glu374. A Glycyl lysine isopeptide (Lys-Gly) (interchain with G-Cter in ubiquitin) cross-link involves residue Lys385. Position 392 is an N6-acetyllysine; alternate (Lys392). Lys392 carries the N6-succinyllysine; alternate modification. A Phosphothreonine; by PASK modification is found at Thr432. Residue Lys439 is modified to N6-acetyllysine.

It belongs to the TRAFAC class translation factor GTPase superfamily. Classic translation factor GTPase family. EF-Tu/EF-1A subfamily. Found in a nuclear export complex with XPO5, EEF1A1, Ran and aminoacylated tRNA. Interacts with PARP1 and TXK. Interacts with KARS1. May interact with ERGIC2. Interacts with IFIT1 (via TPR repeats 4-7). Interacts with DLC1, facilitating distribution to the membrane periphery and ruffles upon growth factor stimulation. Interacts with ZPR1; the interaction occurs in a epidermal growth factor (EGF)-dependent manner. Interacts with PPP1R16B. Interacts with SPHK1 and SPHK2; both interactions increase SPHK1 and SPHK2 kinase activity. Interacts with guanyl-nucleotide exchange factor EEF1B2. Interacts (via middle-region) with HTATIP2 (via N-terminus); the interaction is direct and competes with EEF1A1 binding to guanyl-nucleotide exchange factor EEF1B2, thereby inhibiting GDP for GTP exchange and reactivation of EEF1A1. Interacts with tRNA. ISGylated. In terms of processing, phosphorylated by TXK. Phosphorylation by PASK increases translation efficiency. Phosphorylated by ROCK2. Phosphorylation by TGFBR1 inhibits translation elongation. Post-translationally, trimethylated at Lys-79 by EEF1AKMT1. Methylated at Lys-165 by EEF1AKMT3, methylation by EEF1AKMT3 is dynamic as well as inducible by stress conditions, such as ER-stress, and plays a regulatory role on mRNA translation. Trimethylated at Lys-318 by EEF1AKMT2. Mono-, di-, and trimethylated at Lys-36 by EEF1AKMT4; trimethylated form is predominant. Methylation by EEF1AKMT4 contributes to the fine-tuning of translation rates for a subset of tRNAs. Trimethylated at Gly-2 by METTL13. Mono- and dimethylated at Lys-55 by METTL13; dimethylated form is predominant. Ubiquitinated at Lys-385 by RNF14 in response to ribosome collisions (ribosome stalling), leading to its degradation by the proteasome and rescue of stalled ribosomes.

It localises to the cytoplasm. The protein resides in the nucleus. The protein localises to the nucleolus. It is found in the cell membrane. The enzyme catalyses GTP + H2O = GDP + phosphate + H(+). Translation elongation factor that catalyzes the GTP-dependent binding of aminoacyl-tRNA (aa-tRNA) to the A-site of ribosomes during the elongation phase of protein synthesis. Base pairing between the mRNA codon and the aa-tRNA anticodon promotes GTP hydrolysis, releasing the aa-tRNA from EEF1A1 and allowing its accommodation into the ribosome. The growing protein chain is subsequently transferred from the P-site peptidyl tRNA to the A-site aa-tRNA, extending it by one amino acid through ribosome-catalyzed peptide bond formation. Also plays a role in the positive regulation of IFNG transcription in T-helper 1 cells as part of an IFNG promoter-binding complex with TXK and PARP1. Also plays a role in cytoskeleton organization by promoting actin bundling. The polypeptide is Elongation factor 1-alpha 1 (EEF1A1) (Equus caballus (Horse)).